We begin with the raw amino-acid sequence, 247 residues long: Elongation factor Ts (247 aa).

The involved in Mg(2+) ion dislocation from EF-Tu stretch occupies residues 82–85 (TDFV).

It belongs to the EF-Ts family.

It is found in the cytoplasm. Its function is as follows. Associates with the EF-Tu.GDP complex and induces the exchange of GDP to GTP. It remains bound to the aminoacyl-tRNA.EF-Tu.GTP complex up to the GTP hydrolysis stage on the ribosome. This chain is Elongation factor Ts (tsf), found in Arthrospira platensis (Spirulina platensis).